A 456-amino-acid chain; its full sequence is Bifunctional protein GlmU (456 aa).

The pyrophosphorylase stretch occupies residues 1–230 (MDKRFAVILA…FQETLGVNDR (230 aa)). Residues 9-12 (LAAG), lysine 23, glutamine 73, and 78-79 (GT) contribute to the UDP-N-acetyl-alpha-D-glucosamine site. Aspartate 103 lines the Mg(2+) pocket. Positions 140, 155, 170, and 228 each coordinate UDP-N-acetyl-alpha-D-glucosamine. Residue asparagine 228 coordinates Mg(2+). The segment at 231-251 (VALSQAEMYMKERINKRHMQN) is linker. The interval 252–456 (GVTLIDPMNT…EDYVKNIHKK (205 aa)) is N-acetyltransferase. The UDP-N-acetyl-alpha-D-glucosamine site is built by arginine 333 and lysine 351. Histidine 363 functions as the Proton acceptor in the catalytic mechanism. The UDP-N-acetyl-alpha-D-glucosamine site is built by tyrosine 366 and asparagine 377. Residues 386-387 (NY), alanine 423, and arginine 440 contribute to the acetyl-CoA site.

The protein in the N-terminal section; belongs to the N-acetylglucosamine-1-phosphate uridyltransferase family. This sequence in the C-terminal section; belongs to the transferase hexapeptide repeat family. Homotrimer. The cofactor is Mg(2+).

It localises to the cytoplasm. The catalysed reaction is alpha-D-glucosamine 1-phosphate + acetyl-CoA = N-acetyl-alpha-D-glucosamine 1-phosphate + CoA + H(+). It catalyses the reaction N-acetyl-alpha-D-glucosamine 1-phosphate + UTP + H(+) = UDP-N-acetyl-alpha-D-glucosamine + diphosphate. The protein operates within nucleotide-sugar biosynthesis; UDP-N-acetyl-alpha-D-glucosamine biosynthesis; N-acetyl-alpha-D-glucosamine 1-phosphate from alpha-D-glucosamine 6-phosphate (route II): step 2/2. Its pathway is nucleotide-sugar biosynthesis; UDP-N-acetyl-alpha-D-glucosamine biosynthesis; UDP-N-acetyl-alpha-D-glucosamine from N-acetyl-alpha-D-glucosamine 1-phosphate: step 1/1. It participates in bacterial outer membrane biogenesis; LPS lipid A biosynthesis. In terms of biological role, catalyzes the last two sequential reactions in the de novo biosynthetic pathway for UDP-N-acetylglucosamine (UDP-GlcNAc). The C-terminal domain catalyzes the transfer of acetyl group from acetyl coenzyme A to glucosamine-1-phosphate (GlcN-1-P) to produce N-acetylglucosamine-1-phosphate (GlcNAc-1-P), which is converted into UDP-GlcNAc by the transfer of uridine 5-monophosphate (from uridine 5-triphosphate), a reaction catalyzed by the N-terminal domain. The sequence is that of Bifunctional protein GlmU from Bacillus velezensis (strain DSM 23117 / BGSC 10A6 / LMG 26770 / FZB42) (Bacillus amyloliquefaciens subsp. plantarum).